The sequence spans 316 residues: Glycine--tRNA ligase alpha subunit (316 aa).

The protein belongs to the class-II aminoacyl-tRNA synthetase family. Tetramer of two alpha and two beta subunits.

The protein resides in the cytoplasm. It carries out the reaction tRNA(Gly) + glycine + ATP = glycyl-tRNA(Gly) + AMP + diphosphate. This chain is Glycine--tRNA ligase alpha subunit, found in Paracoccus denitrificans (strain Pd 1222).